Here is a 427-residue protein sequence, read N- to C-terminus: Zinc finger protein DPF3 (427 aa).

The disordered stretch occupies residues 182 to 244; it reads LENDENADEV…NDAASQDDHD (63 aa). Acidic residues predominate over residues 184-199; that stretch reads NDENADEVNEEEDLEE. A compositionally biased stretch (basic and acidic residues) spans 233–244; sequence RRNDAASQDDHD. The C2H2-type zinc-finger motif lies at 247 to 270; it reads YVCDICGKRYKNRPGLSYHYAHTH. Residues 272 to 301 form a disordered region; it reads ASEEGDEAREQETRSSPVHRNENHKPQKGP. The span at 279–296 shows a compositional bias: basic and acidic residues; the sequence is AREQETRSSPVHRNENHK. PHD-type zinc fingers lie at residues 308-368 and 365-415; these read NNYC…CKSC and CKSC…CREL.

It belongs to the requiem/DPF family. In terms of assembly, component of the BAF complex. Interacts with acetylated histones H3 and H4. Component of neuron-specific chromatin remodeling complex (nBAF complex), a subfamily of ATP-dependent SWI/SNF chromatin remodeling complexes. In terms of tissue distribution, expressed in the heart and somites.

The protein resides in the nucleus. In terms of biological role, muscle-specific component of the BAF complex, a multiprotein complex involved in transcriptional activation and repression of select genes by chromatin remodeling (alteration of DNA-nucleosome topology). Specifically binds acetylated lysines on histone 3 and 4. In the complex, it acts as a tissue-specific anchor between histone acetylations and methylations and chromatin remodeling. It thereby probably plays an essential role in heart and skeletal muscle development. Belongs to the neuron-specific chromatin remodeling complex (nBAF complex) and plays a role in neural development. The sequence is that of Zinc finger protein DPF3 (DPF3) from Gallus gallus (Chicken).